The primary structure comprises 400 residues: Acetate kinase (400 aa).

Asn10 contributes to the Mg(2+) binding site. Lys17 is a binding site for ATP. A substrate-binding site is contributed by Arg91. Residue Asp150 is the Proton donor/acceptor of the active site. ATP is bound by residues 210–214, 285–287, and 333–337; these read HLGNG, DCR, and GIGEN. Mg(2+) is bound at residue Glu387.

It belongs to the acetokinase family. In terms of assembly, homodimer. It depends on Mg(2+) as a cofactor. Mn(2+) is required as a cofactor.

Its subcellular location is the cytoplasm. The catalysed reaction is acetate + ATP = acetyl phosphate + ADP. The protein operates within metabolic intermediate biosynthesis; acetyl-CoA biosynthesis; acetyl-CoA from acetate: step 1/2. Its function is as follows. Catalyzes the formation of acetyl phosphate from acetate and ATP. Can also catalyze the reverse reaction. This Serratia proteamaculans (strain 568) protein is Acetate kinase.